Reading from the N-terminus, the 205-residue chain is Ribonuclease HII (205 aa).

Positions 16-205 (VSEVGIDEVG…KSFLKKSKLI (190 aa)) constitute an RNase H type-2 domain. Residues D22, E23, and D118 each coordinate a divalent metal cation.

Belongs to the RNase HII family. Requires Mn(2+) as cofactor. Mg(2+) serves as cofactor.

The protein resides in the cytoplasm. It carries out the reaction Endonucleolytic cleavage to 5'-phosphomonoester.. In terms of biological role, endonuclease that specifically degrades the RNA of RNA-DNA hybrids. The sequence is that of Ribonuclease HII from Prochlorococcus marinus (strain AS9601).